Reading from the N-terminus, the 398-residue chain is Cytochrome b (398 aa).

Residues 45-65 form a helical membrane-spanning segment; sequence LGSIAGIALVIQIITGVILAM. Heme b contacts are provided by H95 and H109. 8 consecutive transmembrane segments (helical) span residues 97–117, 129–149, 164–184, 192–212, 245–265, 304–324, 335–355, and 364–384; these read VGAS…LYYG, IGII…VLPW, FSAI…GFSV, FFSL…LHLL, FVGF…EPNY, LAGV…PWLD, PIYR…GYLG, and IIIS…VLPL. Heme b-binding residues include H196 and H210.

This sequence belongs to the cytochrome b family. In terms of assembly, the main subunits of complex b-c1 are: cytochrome b, cytochrome c1 and the Rieske protein. It depends on heme b as a cofactor.

The protein localises to the cell membrane. Component of the ubiquinol-cytochrome c reductase complex (complex III or cytochrome b-c1 complex), which is a respiratory chain that generates an electrochemical potential coupled to ATP synthesis. The chain is Cytochrome b (petB) from Rickettsia typhi (strain ATCC VR-144 / Wilmington).